The chain runs to 425 residues: Histidinol dehydrogenase (425 aa).

Substrate is bound by residues Ser231, Gln253, and His256. Zn(2+) is bound by residues Gln253 and His256. Catalysis depends on proton acceptor residues Glu321 and His322. Substrate contacts are provided by His322, Asp355, Glu409, and His414. Residue Asp355 participates in Zn(2+) binding. His414 contributes to the Zn(2+) binding site.

It belongs to the histidinol dehydrogenase family. Zn(2+) is required as a cofactor.

It catalyses the reaction L-histidinol + 2 NAD(+) + H2O = L-histidine + 2 NADH + 3 H(+). It functions in the pathway amino-acid biosynthesis; L-histidine biosynthesis; L-histidine from 5-phospho-alpha-D-ribose 1-diphosphate: step 9/9. In terms of biological role, catalyzes the sequential NAD-dependent oxidations of L-histidinol to L-histidinaldehyde and then to L-histidine. The chain is Histidinol dehydrogenase from Carboxydothermus hydrogenoformans (strain ATCC BAA-161 / DSM 6008 / Z-2901).